We begin with the raw amino-acid sequence, 198 residues long: Recombination protein RecR (198 aa).

A C4-type zinc finger spans residues 57–72; the sequence is CAMCNTFTESAVCETC. Positions 80 to 175 constitute a Toprim domain; it reads ALLCVVETPG…KVSRLARGVP (96 aa).

It belongs to the RecR family.

In terms of biological role, may play a role in DNA repair. It seems to be involved in an RecBC-independent recombinational process of DNA repair. It may act with RecF and RecO. This is Recombination protein RecR from Herminiimonas arsenicoxydans.